Here is a 179-residue protein sequence, read N- to C-terminus: Inner membrane-spanning protein YciB (179 aa).

Helical transmembrane passes span Ile-22–Val-42, Met-50–Asn-70, Trp-76–Met-96, Leu-121–Leu-141, and Phe-149–Ile-169.

Belongs to the YciB family.

It localises to the cell inner membrane. Plays a role in cell envelope biogenesis, maintenance of cell envelope integrity and membrane homeostasis. This Klebsiella pneumoniae subsp. pneumoniae (strain ATCC 700721 / MGH 78578) protein is Inner membrane-spanning protein YciB.